Here is a 175-residue protein sequence, read N- to C-terminus: ATP synthase subunit b (175 aa).

The helical transmembrane segment at 20–40 (LIFWTAITFVIVLLILKKIAW) threads the bilayer.

This sequence belongs to the ATPase B chain family. As to quaternary structure, F-type ATPases have 2 components, F(1) - the catalytic core - and F(0) - the membrane proton channel. F(1) has five subunits: alpha(3), beta(3), gamma(1), delta(1), epsilon(1). F(0) has four main subunits: a(1), b(2) and c(10-14). The alpha and beta chains form an alternating ring which encloses part of the gamma chain. F(1) is attached to F(0) by a central stalk formed by the gamma and epsilon chains, while a peripheral stalk is formed by the delta and b chains.

Its subcellular location is the cell inner membrane. Its function is as follows. F(1)F(0) ATP synthase produces ATP from ADP in the presence of a proton or sodium gradient. F-type ATPases consist of two structural domains, F(1) containing the extramembraneous catalytic core and F(0) containing the membrane proton channel, linked together by a central stalk and a peripheral stalk. During catalysis, ATP synthesis in the catalytic domain of F(1) is coupled via a rotary mechanism of the central stalk subunits to proton translocation. Component of the F(0) channel, it forms part of the peripheral stalk, linking F(1) to F(0). This Chlorobium chlorochromatii (strain CaD3) protein is ATP synthase subunit b.